Consider the following 412-residue polypeptide: Serine hydroxymethyltransferase (412 aa).

Residues Leu-117 and 121–123 (GHL) each bind (6S)-5,6,7,8-tetrahydrofolate. Lys-226 carries the N6-(pyridoxal phosphate)lysine modification. Residue 349-351 (SPF) participates in (6S)-5,6,7,8-tetrahydrofolate binding.

The protein belongs to the SHMT family. As to quaternary structure, homodimer. It depends on pyridoxal 5'-phosphate as a cofactor.

The protein localises to the cytoplasm. It carries out the reaction (6R)-5,10-methylene-5,6,7,8-tetrahydrofolate + glycine + H2O = (6S)-5,6,7,8-tetrahydrofolate + L-serine. The protein operates within one-carbon metabolism; tetrahydrofolate interconversion. It participates in amino-acid biosynthesis; glycine biosynthesis; glycine from L-serine: step 1/1. Catalyzes the reversible interconversion of serine and glycine with tetrahydrofolate (THF) serving as the one-carbon carrier. This reaction serves as the major source of one-carbon groups required for the biosynthesis of purines, thymidylate, methionine, and other important biomolecules. Also exhibits THF-independent aldolase activity toward beta-hydroxyamino acids, producing glycine and aldehydes, via a retro-aldol mechanism. The polypeptide is Serine hydroxymethyltransferase (Nitratidesulfovibrio vulgaris (strain ATCC 29579 / DSM 644 / CCUG 34227 / NCIMB 8303 / VKM B-1760 / Hildenborough) (Desulfovibrio vulgaris)).